The sequence spans 201 residues: Calcium channel flower (201 aa).

Transmembrane regions (helical) follow at residues 37 to 57 (LGIVGAFFAILFGLWNVLSII), 59 to 79 (LSVSCLVAGIIQMIAGFVVMA), and 103 to 120 (PMYFRAGLYCALAVPPIF).

This sequence belongs to the calcium channel flower family. As to quaternary structure, homomultimer. Associates with the dally/ magu complex.

Its subcellular location is the cell membrane. It localises to the cytoplasmic vesicle. The protein localises to the secretory vesicle. It is found in the synaptic vesicle membrane. The protein resides in the presynaptic cell membrane. Its subcellular location is the endosome. With respect to regulation, channel activity is inhibited by La(3+), which reduces Ca(2+) influx and thus inhibits it's function in promoting activity-dependent bulk endocytosis (ADBE) in response to high stimuli. Functionally, transmembrane protein which mediates synaptic endocytosis, fitness-based cell culling, neuronal culling, morphogen gradient scaling, and calcium transport. Regulates synaptic endocytosis and hence couples exo- with endocytosis. Controls two major modes of synaptic vesicle (SV) endocytosis in the synaptic boutons of neuromuscular junctions (NMJs); Ca(2+) channel-independent Clathrin-mediated endocytosis (CME) in response to mild stimulation, and Ca(2+) channel-dependent activity-dependent bulk endocytosis (ADBE) in response to strong stimulation. Functions in ADBE and subsequent SV reformation from bulk endosomes by initiating Ca(2+) channel-dependent phosphatidylinositol 4,5-bisphosphate (PtdIns(4,5)P2) compartmentalization in synaptic boutons. There it acts at the periactive zone to provide the low Ca(2+) levels required to initiate Calcineurin activation and upregulate PtdIns(4,5)P2. Conversely PtdIns(4,5)P2 enhances fwe Ca(2+) channel-activity, establishing a positive feedback loop that induces PtdIns(4,5)P2 microdomain at the periactive zone. These microdomains trigger bulk membrane invagination (i.e. ADBE) by triggering actin polymerization while also promoting localization of fwe to bulk endosomes, thereby removing the ADBE trigger to reduce endocytosis and prevent excess membrane uptake. PtdIns(4,5)P2 then promotes SV reformation from the bulk endosomes, to coordinate ADBE and subsequent SV reformation. Different combinations of the flower isoforms at the cell membrane are also required for the identification and elimination of suboptimal or supernumerary cells during development, regeneration, and adulthood. Required for the recognition and elimination of unfit cells in the developing wing during cell competition. In the developing pupal retina, mediates the elimination of unwanted postmitotic neurons, including supernumerary photoreceptor neurons that form at the periphery of the retina and are contained within incomplete ommatidia units. Also required for efficient elimination and replacement of old neurons by newly generated neurons during regeneration in the adult brain following mechanical injury. Downstream of the flower fitness fingerprints, cells identified as unwanted or unfit are eliminated via apoptosis through the expression of ahuizotl (azot). However, the cells marked for elimination by the flower isoforms only undergo apoptosis if additional thresholds are met; (1) their neighboring fit/healthy cells express different levels of the fwe isoforms, and (2) the levels of the protective signal SPARC expressed by the loser or unwanted cells are unable to inhibit caspase activation. These additional thresholds for flower-mediated apoptosis, allows useful cells to recover from transient and limited stress before they are unnecessarily eliminated. Functions with dally and magu in a mechanism of scaling, which utilises apoptosis to ensure that the dpp morphogen gradient, which mediates organ growth, remains proportional to the size of the growing wing. In this mechanism, fwe represses dally- and Magu-dependent activity in expanding the gradient, and dally/Magu inhibits fwe-dependent apoptosis to keep cell death rate low. When the levels of these different proteins are optimally regulated the gradient correctly scales with organ growth but when this fails, fwe-mediated apoptosis is activated to trim the developing tissue to match the correct size of the gradient. This Drosophila willistoni (Fruit fly) protein is Calcium channel flower.